Here is a 336-residue protein sequence, read N- to C-terminus: Eukaryotic translation initiation factor 3 subunit H (336 aa).

One can recognise an MPN domain in the interval 21–154; it reads VQCDGLAAMK…LKAYRLTPQA (134 aa).

This sequence belongs to the eIF-3 subunit H family. In terms of assembly, component of the eukaryotic translation initiation factor 3 (eIF-3) complex.

It localises to the cytoplasm. In terms of biological role, component of the eukaryotic translation initiation factor 3 (eIF-3) complex, which is involved in protein synthesis of a specialized repertoire of mRNAs and, together with other initiation factors, stimulates binding of mRNA and methionyl-tRNAi to the 40S ribosome. The eIF-3 complex specifically targets and initiates translation of a subset of mRNAs involved in cell proliferation. This is Eukaryotic translation initiation factor 3 subunit H from Aedes aegypti (Yellowfever mosquito).